We begin with the raw amino-acid sequence, 1396 residues long: Sterol 3-beta-glucosyltransferase (1396 aa).

Positions Met-1 to Leu-16 are enriched in basic and acidic residues. 3 disordered regions span residues Met-1 to Gly-59, His-82 to Val-193, and Ser-206 to Ser-233. Residues Ala-18 to Ile-28 are compositionally biased toward polar residues. 2 stretches are compositionally biased toward basic and acidic residues: residues Glu-35–Gln-44 and His-82–Gln-108. A compositionally biased stretch (polar residues) spans Gly-156–Ser-175. A GRAM 1 domain is found at Leu-237–Val-288. The 99-residue stretch at Ala-289–Phe-387 folds into the PH domain. 2 stretches are compositionally biased toward polar residues: residues Gln-459–Ala-479 and Ser-487–Gly-497. Disordered stretches follow at residues Gln-459–Ser-531 and Phe-576–Ser-635. Basic and acidic residues predominate over residues Gln-585–Ala-595. The GRAM 2 domain maps to Asp-719–Lys-785. Positions Glu-841–Pro-880 are disordered. The span at Glu-846–Ala-862 shows a compositional bias: basic and acidic residues. Residues Ser-907, Arg-908, Asp-910, Ala-1210, His-1212, His-1225, Gly-1229, Thr-1230, Asp-1249, and Gln-1250 each coordinate UDP-alpha-D-glucose.

This sequence belongs to the glycosyltransferase 28 family.

It is found in the cytoplasm. It localises to the preautophagosomal structure membrane. The enzyme catalyses a sterol + UDP-alpha-D-glucose = a sterol 3-beta-D-glucoside + UDP + H(+). It catalyses the reaction ergosterol + UDP-alpha-D-glucose = ergosteryl 3-beta-D-glucoside + UDP + H(+). Its function is as follows. Sterol glycosyltransferase responsible for the glycosylation of ergosterol to form ergosterol-glucoside. This Aspergillus terreus (strain NIH 2624 / FGSC A1156) protein is Sterol 3-beta-glucosyltransferase.